The primary structure comprises 341 residues: Biotin synthase (341 aa).

Residues 40 to 264 (NSVKLNYLVN…VAPRSELRIA (225 aa)) enclose the Radical SAM core domain. Cysteine 55, cysteine 59, and cysteine 62 together coordinate [4Fe-4S] cluster. Residues cysteine 99, cysteine 132, cysteine 192, and arginine 262 each contribute to the [2Fe-2S] cluster site. The segment at 317-341 (ASAPQGGVEPVLRKRGAGTELQPNA) is disordered.

This sequence belongs to the radical SAM superfamily. Biotin synthase family. As to quaternary structure, homodimer. [4Fe-4S] cluster serves as cofactor. It depends on [2Fe-2S] cluster as a cofactor.

The enzyme catalyses (4R,5S)-dethiobiotin + (sulfur carrier)-SH + 2 reduced [2Fe-2S]-[ferredoxin] + 2 S-adenosyl-L-methionine = (sulfur carrier)-H + biotin + 2 5'-deoxyadenosine + 2 L-methionine + 2 oxidized [2Fe-2S]-[ferredoxin]. The protein operates within cofactor biosynthesis; biotin biosynthesis; biotin from 7,8-diaminononanoate: step 2/2. Functionally, catalyzes the conversion of dethiobiotin (DTB) to biotin by the insertion of a sulfur atom into dethiobiotin via a radical-based mechanism. This is Biotin synthase from Renibacterium salmoninarum (strain ATCC 33209 / DSM 20767 / JCM 11484 / NBRC 15589 / NCIMB 2235).